A 400-amino-acid polypeptide reads, in one-letter code: Forkhead box protein A4-B (400 aa).

The segment at residues Lys119–Lys213 is a DNA-binding region (fork-head). Residues Glu218–Asp234 show a composition bias toward basic and acidic residues. The tract at residues Glu218–Ala290 is disordered. Polar residues-rich tracts occupy residues Asp249–Ala258 and Ser267–Gly277.

In terms of tissue distribution, primarily expressed in the dorsal blastopore lip (Spemann organizer) of early gastrulae. At later stages, expressed in the dorsal mesoderm and the neural floor plate. In the dorsal mesoderm, expressed in the notochord but not in the presomitic mesoderm. Also expressed in the mid-brain area.

Its subcellular location is the nucleus. Functionally, transcriptional repressor involved in embryonic nervous system development. Plays a role in the induction and patterning of the anterior-posterior neural axis. Involved in the establishment of floor plate differentiation from neural plate cells during gastrulation. Binds the anf1 promoter sequence to restrict expression of anf1 to the anterior of the neural plate, thereby patterning the forebrain. Can bind to the HNF-3-alpha DNA target sequence. Cooperates with t/bra in a dose-dependent manner to specify dorsal mesoderm formation, including notochord. May be involved in the dorso-ventral patterning of the mesoderm. Binds to DNA via the target sequence 5'-[GA]TAAA[TC]A-3', with 5'-GTAAATA-3' being the preferred binding site. This chain is Forkhead box protein A4-B (foxa4-b), found in Xenopus laevis (African clawed frog).